Reading from the N-terminus, the 408-residue chain is Probable cysteine desulfurase (408 aa).

Lysine 225 is modified (N6-(pyridoxal phosphate)lysine).

This sequence belongs to the class-V pyridoxal-phosphate-dependent aminotransferase family. Csd subfamily. Pyridoxal 5'-phosphate serves as cofactor.

It carries out the reaction (sulfur carrier)-H + L-cysteine = (sulfur carrier)-SH + L-alanine. Functionally, catalyzes the removal of elemental sulfur and selenium atoms from L-cysteine, L-cystine, L-selenocysteine, and L-selenocystine to produce L-alanine. The chain is Probable cysteine desulfurase (csd) from Mycoplasma pneumoniae (strain ATCC 29342 / M129 / Subtype 1) (Mycoplasmoides pneumoniae).